The chain runs to 98 residues: NADH-ubiquinone oxidoreductase chain 4L (98 aa).

The next 3 membrane-spanning stretches (helical) occupy residues 2–22, 28–48, and 61–81; these read PSIS…MLMF, SSLL…TLII, and IMLL…LVMV.

This sequence belongs to the complex I subunit 4L family. Core subunit of respiratory chain NADH dehydrogenase (Complex I) which is composed of 45 different subunits.

Its subcellular location is the mitochondrion inner membrane. It catalyses the reaction a ubiquinone + NADH + 5 H(+)(in) = a ubiquinol + NAD(+) + 4 H(+)(out). Core subunit of the mitochondrial membrane respiratory chain NADH dehydrogenase (Complex I) which catalyzes electron transfer from NADH through the respiratory chain, using ubiquinone as an electron acceptor. Part of the enzyme membrane arm which is embedded in the lipid bilayer and involved in proton translocation. The sequence is that of NADH-ubiquinone oxidoreductase chain 4L (MT-ND4L) from Allocebus trichotis (Hairy-eared dwarf lemur).